Reading from the N-terminus, the 352-residue chain is Photosystem II D2 protein (352 aa).

The helical transmembrane segment at Cys40–Thr60 threads the bilayer. His117 contributes to the chlorophyll a binding site. Residues Gly124 to Pro140 traverse the membrane as a helical segment. 2 residues coordinate pheophytin a: Gln129 and Asn142. The helical transmembrane segment at Val152–Ser165 threads the bilayer. A chlorophyll a-binding site is contributed by His197. A helical transmembrane segment spans residues Gly207–Asp227. A plastoquinone is bound by residues His214 and Phe261. His214 contacts Fe cation. Residue His268 participates in Fe cation binding. Residues Gly278 to Arg294 traverse the membrane as a helical segment.

Belongs to the reaction center PufL/M/PsbA/D family. As to quaternary structure, PSII is composed of 1 copy each of membrane proteins PsbA, PsbB, PsbC, PsbD, PsbE, PsbF, PsbH, PsbI, PsbJ, PsbK, PsbL, PsbM, PsbT, PsbX, PsbY, PsbZ, Psb30/Ycf12, peripheral proteins PsbO, CyanoQ (PsbQ), PsbU, PsbV and a large number of cofactors. It forms dimeric complexes. The D1/D2 heterodimer binds P680, chlorophylls that are the primary electron donor of PSII, and subsequent electron acceptors. It shares a non-heme iron and each subunit binds pheophytin, quinone, additional chlorophylls, carotenoids and lipids. There is also a Cl(-1) ion associated with D1 and D2, which is required for oxygen evolution. The PSII complex binds additional chlorophylls, carotenoids and specific lipids. is required as a cofactor.

Its subcellular location is the cellular thylakoid membrane. It catalyses the reaction 2 a plastoquinone + 4 hnu + 2 H2O = 2 a plastoquinol + O2. Its function is as follows. Photosystem II (PSII) is a light-driven water:plastoquinone oxidoreductase that uses light energy to abstract electrons from H(2)O, generating O(2) and a proton gradient subsequently used for ATP formation. It consists of a core antenna complex that captures photons, and an electron transfer chain that converts photonic excitation into a charge separation. The D1/D2 (PsbA/PsbD) reaction center heterodimer binds P680, the primary electron donor of PSII as well as several subsequent electron acceptors. D2 is needed for assembly of a stable PSII complex. This is Photosystem II D2 protein from Picosynechococcus sp. (strain ATCC 27264 / PCC 7002 / PR-6) (Agmenellum quadruplicatum).